Consider the following 249-residue polypeptide: 5'-nucleotidase SurE (249 aa).

A divalent metal cation-binding residues include aspartate 8, aspartate 9, serine 39, and asparagine 91.

This sequence belongs to the SurE nucleotidase family. Requires a divalent metal cation as cofactor.

It localises to the cytoplasm. The catalysed reaction is a ribonucleoside 5'-phosphate + H2O = a ribonucleoside + phosphate. In terms of biological role, nucleotidase that shows phosphatase activity on nucleoside 5'-monophosphates. The protein is 5'-nucleotidase SurE of Pseudomonas putida (strain W619).